Consider the following 357-residue polypeptide: Scopoletin 8-hydroxylase (357 aa).

The Fe2OG dioxygenase domain maps to 206 to 307 (MGTKMVNMNY…RVSVPIFTAP (102 aa)). Residue Tyr216 coordinates 2-oxoglutarate. His231, Asp233, and His288 together coordinate Fe cation. The 2-oxoglutarate site is built by Arg298 and Ser300.

This sequence belongs to the iron/ascorbate-dependent oxidoreductase family. L-ascorbate serves as cofactor. The cofactor is Fe(2+). Expressed in both primary and lateral roots under iron-deficient conditions, except in apical root zones, and mostly in the root epidermal layer.

It catalyses the reaction scopoletin + 2-oxoglutarate + O2 = fraxetin + succinate + CO2. It participates in phenylpropanoid metabolism. In terms of biological role, involved in the pathway of sideretin biosynthesis from feruloyl CoA, a redox-active catecholic metabolite exuded by roots in response to iron deficiency in order to facilitate the uptake of iron; this pathway consists in the successive conversion from feruloyl CoA to scopoletin, from scopoletin to fraxetin and from fraxetin to sideretin. Catalyzes the biosynthesis of fraxetin via scopoletin hydroxylation. This is Scopoletin 8-hydroxylase from Arabidopsis thaliana (Mouse-ear cress).